The chain runs to 150 residues: Ribosome-binding factor A (150 aa).

Positions 126–150 (EVARDLSHDDDEDGGADEAPRNGDE) are disordered.

The protein belongs to the RbfA family. In terms of assembly, monomer. Binds 30S ribosomal subunits, but not 50S ribosomal subunits or 70S ribosomes.

The protein resides in the cytoplasm. Its function is as follows. One of several proteins that assist in the late maturation steps of the functional core of the 30S ribosomal subunit. Associates with free 30S ribosomal subunits (but not with 30S subunits that are part of 70S ribosomes or polysomes). Required for efficient processing of 16S rRNA. May interact with the 5'-terminal helix region of 16S rRNA. The sequence is that of Ribosome-binding factor A from Brucella suis (strain ATCC 23445 / NCTC 10510).